Consider the following 306-residue polypeptide: tRNA dimethylallyltransferase (306 aa).

2 to 9 contacts ATP; sequence GPTASGKT. 4 to 9 is a binding site for substrate; sequence TASGKT. Interaction with substrate tRNA regions lie at residues 27-30 and 152-156; these read DSVQ and QRIVR.

This sequence belongs to the IPP transferase family. Monomer. It depends on Mg(2+) as a cofactor.

It carries out the reaction adenosine(37) in tRNA + dimethylallyl diphosphate = N(6)-dimethylallyladenosine(37) in tRNA + diphosphate. Catalyzes the transfer of a dimethylallyl group onto the adenine at position 37 in tRNAs that read codons beginning with uridine, leading to the formation of N6-(dimethylallyl)adenosine (i(6)A). This chain is tRNA dimethylallyltransferase, found in Magnetococcus marinus (strain ATCC BAA-1437 / JCM 17883 / MC-1).